Consider the following 584-residue polypeptide: Arginine--tRNA ligase (584 aa).

A 'HIGH' region motif is present at residues P125–H135.

The protein belongs to the class-I aminoacyl-tRNA synthetase family. In terms of assembly, monomer.

It is found in the cytoplasm. The enzyme catalyses tRNA(Arg) + L-arginine + ATP = L-arginyl-tRNA(Arg) + AMP + diphosphate. This Thermosynechococcus vestitus (strain NIES-2133 / IAM M-273 / BP-1) protein is Arginine--tRNA ligase.